Here is a 103-residue protein sequence, read N- to C-terminus: Large ribosomal subunit protein uL24 (103 aa).

Belongs to the universal ribosomal protein uL24 family. As to quaternary structure, part of the 50S ribosomal subunit.

Functionally, one of two assembly initiator proteins, it binds directly to the 5'-end of the 23S rRNA, where it nucleates assembly of the 50S subunit. One of the proteins that surrounds the polypeptide exit tunnel on the outside of the subunit. The sequence is that of Large ribosomal subunit protein uL24 from Syntrophomonas wolfei subsp. wolfei (strain DSM 2245B / Goettingen).